The primary structure comprises 129 residues: Glycine cleavage system H protein (129 aa).

The region spanning 24-106 (TVVVGVTSYA…YGDGWLIKVR (83 aa)) is the Lipoyl-binding domain. Position 65 is an N6-lipoyllysine (Lys65).

Belongs to the GcvH family. As to quaternary structure, the glycine cleavage system is composed of four proteins: P, T, L and H. (R)-lipoate is required as a cofactor.

Functionally, the glycine cleavage system catalyzes the degradation of glycine. The H protein shuttles the methylamine group of glycine from the P protein to the T protein. This chain is Glycine cleavage system H protein, found in Gloeobacter violaceus (strain ATCC 29082 / PCC 7421).